We begin with the raw amino-acid sequence, 401 residues long: Imidazolonepropionase (401 aa).

Fe(3+)-binding residues include His70 and His72. Residues His70 and His72 each coordinate Zn(2+). Positions 79, 142, and 175 each coordinate 4-imidazolone-5-propanoate. Residue Tyr142 coordinates N-formimidoyl-L-glutamate. His238 contacts Fe(3+). Residue His238 coordinates Zn(2+). Gln241 contacts 4-imidazolone-5-propanoate. Asp313 serves as a coordination point for Fe(3+). Asp313 lines the Zn(2+) pocket. The N-formimidoyl-L-glutamate site is built by Asn315 and Gly317. Residue Thr318 coordinates 4-imidazolone-5-propanoate.

Belongs to the metallo-dependent hydrolases superfamily. HutI family. It depends on Zn(2+) as a cofactor. The cofactor is Fe(3+).

The protein localises to the cytoplasm. It catalyses the reaction 4-imidazolone-5-propanoate + H2O = N-formimidoyl-L-glutamate. It functions in the pathway amino-acid degradation; L-histidine degradation into L-glutamate; N-formimidoyl-L-glutamate from L-histidine: step 3/3. In terms of biological role, catalyzes the hydrolytic cleavage of the carbon-nitrogen bond in imidazolone-5-propanoate to yield N-formimidoyl-L-glutamate. It is the third step in the universal histidine degradation pathway. The protein is Imidazolonepropionase of Xanthomonas campestris pv. campestris (strain 8004).